Here is a 364-residue protein sequence, read N- to C-terminus: Aminomethyltransferase (364 aa).

The protein belongs to the GcvT family. The glycine cleavage system is composed of four proteins: P, T, L and H.

It carries out the reaction N(6)-[(R)-S(8)-aminomethyldihydrolipoyl]-L-lysyl-[protein] + (6S)-5,6,7,8-tetrahydrofolate = N(6)-[(R)-dihydrolipoyl]-L-lysyl-[protein] + (6R)-5,10-methylene-5,6,7,8-tetrahydrofolate + NH4(+). Its function is as follows. The glycine cleavage system catalyzes the degradation of glycine. In Enterobacter sp. (strain 638), this protein is Aminomethyltransferase.